We begin with the raw amino-acid sequence, 370 residues long: Chorismate synthase (370 aa).

Arginine 48 serves as a coordination point for NADP(+). FMN-binding positions include 125–127 (RSS), 241–242 (NA), glycine 285, 300–304 (KPTSS), and arginine 326.

This sequence belongs to the chorismate synthase family. In terms of assembly, homotetramer. FMNH2 serves as cofactor.

It catalyses the reaction 5-O-(1-carboxyvinyl)-3-phosphoshikimate = chorismate + phosphate. The protein operates within metabolic intermediate biosynthesis; chorismate biosynthesis; chorismate from D-erythrose 4-phosphate and phosphoenolpyruvate: step 7/7. In terms of biological role, catalyzes the anti-1,4-elimination of the C-3 phosphate and the C-6 proR hydrogen from 5-enolpyruvylshikimate-3-phosphate (EPSP) to yield chorismate, which is the branch point compound that serves as the starting substrate for the three terminal pathways of aromatic amino acid biosynthesis. This reaction introduces a second double bond into the aromatic ring system. This is Chorismate synthase from Jannaschia sp. (strain CCS1).